A 414-amino-acid polypeptide reads, in one-letter code: Nuclear localization sequence-binding protein (414 aa).

Disordered regions lie at residues 1–172 (MAKT…TIFV), 244–264 (STSKPAGNNDRAKKFGDTPSE), and 336–414 (RPVR…KTFD). The span at 10 to 26 (NKKEVKASKQAKEEKAK) shows a compositional bias: basic and acidic residues. Low complexity-rich tracts occupy residues 27 to 44 (AVSSSSSESSSSSSSSSE) and 54 to 73 (ESSSSSSSSDSESSSSSSSD). A compositionally biased stretch (basic and acidic residues) spans 78–87 (AETKKEESKD). Residues serine 93, serine 95, serine 96, serine 97, serine 116, serine 127, serine 129, serine 131, and serine 143 each carry the phosphoserine modification. Acidic residues predominate over residues 96-105 (SSDEEEEEEK). A compositionally biased stretch (basic and acidic residues) spans 106–117 (EETKKEESKESS). Residues 118 to 128 (SSDSSSSSSSD) show a composition bias toward low complexity. Positions 134-144 (EESNDKKRKSE) are enriched in basic and acidic residues. 2 RRM domains span residues 168-246 (ATIF…MSTS) and 267-345 (DTLF…FSSP). Residues 351–386 (GGRGGSRGFGGRGGGRGGNRGFGGRGGARGGRGGFR) are compositionally biased toward gly residues. Arginine 353 bears the Omega-N-methylarginine mark. The interval 353–384 (RGGSRGFGGRGGGRGGNRGFGGRGGARGGRGG) is RGG-box. Residues arginine 357, arginine 362, and arginine 366 each carry the asymmetric dimethylarginine; by HMT1; alternate modification. An omega-N-methylarginine; by HMT1; alternate mark is found at arginine 357, arginine 362, and arginine 366. The interval 366–384 (RGGNRGFGGRGGARGGRGG) is RNA-binding RGG-box. Residue arginine 370 is modified to Omega-N-methylarginine. Asymmetric dimethylarginine; by HMT1; alternate is present on residues arginine 375, arginine 379, and arginine 382. Arginine 375, arginine 379, and arginine 382 each carry omega-N-methylarginine; by HMT1; alternate. Arginine 386 is subject to Omega-N-methylarginine.

It belongs to the RRM GAR family. Methylated by HMT1, forming asymmetric dimethylarginines (DMA) within a domain referred to as an RGG box, made up of repeated Gly-Gly dipeptides interspersed with Arg and aromatic residues. Post-translationally, pyrophosphorylated by 5-diphosphoinositol pentakisphosphate (5-IP7). Serine pyrophosphorylation is achieved by Mg(2+)-dependent, but enzyme independent transfer of a beta-phosphate from a inositol pyrophosphate to a pre-phosphorylated serine residue.

The protein localises to the nucleus. It is found in the nucleolus. In terms of biological role, involved in pre-rRNA processing. Specifically binds nuclear localization sequences. Candidate for a receptor at the nucleus that may be involved in both RNA and protein transport. Binds telomeric sequences of the type (TG[1-3])n in vitro. The polypeptide is Nuclear localization sequence-binding protein (Saccharomyces cerevisiae (strain ATCC 204508 / S288c) (Baker's yeast)).